A 304-amino-acid polypeptide reads, in one-letter code: tRNA dimethylallyltransferase (304 aa).

2–9 (GPTASGKT) contributes to the ATP binding site. 4-9 (TASGKT) contacts substrate. The tract at residues 28-31 (DSAL) is interaction with substrate tRNA.

Belongs to the IPP transferase family. Monomer. The cofactor is Mg(2+).

The catalysed reaction is adenosine(37) in tRNA + dimethylallyl diphosphate = N(6)-dimethylallyladenosine(37) in tRNA + diphosphate. Catalyzes the transfer of a dimethylallyl group onto the adenine at position 37 in tRNAs that read codons beginning with uridine, leading to the formation of N6-(dimethylallyl)adenosine (i(6)A). This Blochmanniella pennsylvanica (strain BPEN) protein is tRNA dimethylallyltransferase.